The following is a 298-amino-acid chain: Ribosomal RNA small subunit methyltransferase A (298 aa).

The S-adenosyl-L-methionine site is built by N35, L37, G62, E83, D108, and N133.

It belongs to the class I-like SAM-binding methyltransferase superfamily. rRNA adenine N(6)-methyltransferase family. RsmA subfamily.

The protein localises to the cytoplasm. The enzyme catalyses adenosine(1518)/adenosine(1519) in 16S rRNA + 4 S-adenosyl-L-methionine = N(6)-dimethyladenosine(1518)/N(6)-dimethyladenosine(1519) in 16S rRNA + 4 S-adenosyl-L-homocysteine + 4 H(+). Specifically dimethylates two adjacent adenosines (A1518 and A1519) in the loop of a conserved hairpin near the 3'-end of 16S rRNA in the 30S particle. May play a critical role in biogenesis of 30S subunits. The protein is Ribosomal RNA small subunit methyltransferase A of Streptococcus pyogenes serotype M2 (strain MGAS10270).